Consider the following 376-residue polypeptide: Alcohol dehydrogenase 1 (376 aa).

Serine 2 is subject to N-acetylserine. Zn(2+)-binding residues include cysteine 47, histidine 68, cysteine 98, cysteine 101, cysteine 104, cysteine 112, and cysteine 176. NAD(+) contacts are provided by residues 201–206 (GLGGVG), aspartate 225, and lysine 230. An N6-succinyllysine modification is found at lysine 235. Position 294 to 296 (294 to 296 (VGV)) interacts with NAD(+). The residue at position 341 (lysine 341) is an N6-succinyllysine. Arginine 371 provides a ligand contact to NAD(+).

This sequence belongs to the zinc-containing alcohol dehydrogenase family. Class-I subfamily. In terms of assembly, dimer of identical or non-identical chains of three types (A, B, C), which are coded by 3 separate genes at different loci. Zn(2+) is required as a cofactor.

It is found in the cytoplasm. The enzyme catalyses a primary alcohol + NAD(+) = an aldehyde + NADH + H(+). It catalyses the reaction a secondary alcohol + NAD(+) = a ketone + NADH + H(+). In Rattus norvegicus (Rat), this protein is Alcohol dehydrogenase 1 (Adh1).